Consider the following 187-residue polypeptide: Elongation factor P (187 aa).

The protein belongs to the elongation factor P family.

The protein localises to the cytoplasm. It functions in the pathway protein biosynthesis; polypeptide chain elongation. In terms of biological role, involved in peptide bond synthesis. Stimulates efficient translation and peptide-bond synthesis on native or reconstituted 70S ribosomes in vitro. Probably functions indirectly by altering the affinity of the ribosome for aminoacyl-tRNA, thus increasing their reactivity as acceptors for peptidyl transferase. The sequence is that of Elongation factor P from Mycoplasmopsis pulmonis (strain UAB CTIP) (Mycoplasma pulmonis).